Here is a 322-residue protein sequence, read N- to C-terminus: Glycerate dehydrogenase (322 aa).

Residues Ser158–Ile159, Asp178, Thr239–Arg241, and Asp265 each bind NAD(+). The active site involves Arg241. The active site involves Glu270. His288 functions as the Proton donor in the catalytic mechanism. An NAD(+)-binding site is contributed by His288–Ser291.

It belongs to the D-isomer specific 2-hydroxyacid dehydrogenase family. In terms of assembly, homodimer.

The enzyme catalyses (R)-glycerate + NAD(+) = 3-hydroxypyruvate + NADH + H(+). It functions in the pathway one-carbon metabolism; formaldehyde assimilation via serine pathway. In terms of biological role, active on hydroxypyruvate and glyoxylate. In Hyphomicrobium methylovorum, this protein is Glycerate dehydrogenase.